Reading from the N-terminus, the 232-residue chain is Peptidyl-prolyl cis-trans isomerase FKBP18, chloroplastic (232 aa).

In terms of domain architecture, PPIase FKBP-type spans 108 to 226 (GSTAQVHFDC…ELNIELLRVT (119 aa)).

It belongs to the FKBP-type PPIase family.

The protein resides in the plastid. Its subcellular location is the chloroplast thylakoid lumen. The enzyme catalyses [protein]-peptidylproline (omega=180) = [protein]-peptidylproline (omega=0). In terms of biological role, PPIases accelerate the folding of proteins. It catalyzes the cis-trans isomerization of proline imidic peptide bonds in oligopeptides. The chain is Peptidyl-prolyl cis-trans isomerase FKBP18, chloroplastic (FKBP18) from Arabidopsis thaliana (Mouse-ear cress).